The primary structure comprises 2639 residues: BAH and coiled-coil domain-containing protein 1 (2639 aa).

Disordered regions lie at residues 23–49 (SAAAAARLAPAGPAAQPPAHFQPGKYF), 84–107 (SAASTHPSGPSSSPPEQAYRGSHP), 188–249 (APAH…GKER), 669–702 (FLSSKGPGQSERPDCARSREHDTTHGDGEVRQPP), 716–746 (VSRSEAAYGTNTARQGRAAPAFKGGGGPRST), 939–1047 (QRAA…QSTA), 1104–1331 (SDVH…HSSG), 1457–1513 (QREL…KKVK), 1582–1666 (KVKS…LGTE), 1722–1776 (EVKI…RDAL), 1868–1893 (FDDNSSFSEEEEDEEEEEEDSGPLSA), and 2057–2119 (KKVS…DHFL). Low complexity-rich tracts occupy residues 24 to 41 (AAAAARLAPAGPAAQPPA) and 84 to 98 (SAASTHPSGPSSSPP). 2 stretches are compositionally biased toward basic and acidic residues: residues 211–247 (GPKDFDRFLVGKELGREKAGKAAEGKERPAAEEDGGK) and 679–698 (ERPDCARSREHDTTHGDGEV). Lys-222 bears the N6-acetyllysine mark. The segment covering 946–964 (RKPEDQHLDLEEPAQEKAP) has biased composition (basic and acidic residues). The span at 972–988 (ALTPTAPGAPSPAAGPT) shows a compositional bias: low complexity. Residues 989–1013 (KLPPCCHPPDPKPPASSPTPPPRPS) show a composition bias toward pro residues. Residues 1106–1122 (VHSSNLEDPETMQTTAP) are compositionally biased toward polar residues. The segment covering 1182 to 1198 (LEGLQELQCAALLEAGG) has biased composition (low complexity). The span at 1212–1221 (AREERSREEG) shows a compositional bias: basic and acidic residues. Over residues 1244–1275 (LEDEGEQPAPEEDELEEDELGQQSMEDSEEDC) the composition is skewed to acidic residues. Positions 1307-1324 (DSPPDPQPPAASGPPSTV) are enriched in pro residues. Residues 1439–1473 (EVGMRVRLAELQRRYKEKQRELARLQRKHDHERDE) are a coiled coil. The segment covering 1457 to 1475 (QRELARLQRKHDHERDESS) has biased composition (basic and acidic residues). Over residues 1478 to 1492 (PARRGPGRPRKRKHS) the composition is skewed to basic residues. The span at 1751-1761 (GKKKAKGKAKG) shows a compositional bias: basic residues. Acidic residues predominate over residues 1868–1888 (FDDNSSFSEEEEDEEEEEEDS). Ser-2274 carries the post-translational modification Phosphoserine. Disordered stretches follow at residues 2317–2336 (SDCHSSFSDEDEDGPGLAAG), 2348–2383 (SSSSSGSSTSSSSGSVSTSSLCSSDNEDSSYSSDDE), and 2432–2472 (GAGS…ENRP). The span at 2348-2371 (SSSSSGSSTSSSSGSVSTSSLCSS) shows a compositional bias: low complexity. Residues 2372-2383 (DNEDSSYSSDDE) show a composition bias toward acidic residues. Over residues 2432–2442 (GAGSGPSSSSK) the composition is skewed to low complexity. Positions 2513–2633 (ETLRVGDCAV…PTTGRLVTAD (121 aa)) constitute a BAH domain.

The protein is BAH and coiled-coil domain-containing protein 1 of Homo sapiens (Human).